The sequence spans 167 residues: UPF0336 protein MAP_4109 (167 aa).

A MaoC-like domain is found at glycine 21–lysine 124.

Belongs to the UPF0336 family.

The chain is UPF0336 protein MAP_4109 from Mycolicibacterium paratuberculosis (strain ATCC BAA-968 / K-10) (Mycobacterium paratuberculosis).